Here is a 52-residue protein sequence, read N- to C-terminus: Large ribosomal subunit protein bL33 (52 aa).

It belongs to the bacterial ribosomal protein bL33 family.

In Helicobacter acinonychis (strain Sheeba), this protein is Large ribosomal subunit protein bL33.